A 517-amino-acid chain; its full sequence is Bifunctional purine biosynthesis protein PurH (517 aa).

The region spanning 1–145 (MSPLALVSVS…KNHKDVSVLV (145 aa)) is the MGS-like domain.

Belongs to the PurH family.

It carries out the reaction (6R)-10-formyltetrahydrofolate + 5-amino-1-(5-phospho-beta-D-ribosyl)imidazole-4-carboxamide = 5-formamido-1-(5-phospho-D-ribosyl)imidazole-4-carboxamide + (6S)-5,6,7,8-tetrahydrofolate. The enzyme catalyses IMP + H2O = 5-formamido-1-(5-phospho-D-ribosyl)imidazole-4-carboxamide. It functions in the pathway purine metabolism; IMP biosynthesis via de novo pathway; 5-formamido-1-(5-phospho-D-ribosyl)imidazole-4-carboxamide from 5-amino-1-(5-phospho-D-ribosyl)imidazole-4-carboxamide (10-formyl THF route): step 1/1. It participates in purine metabolism; IMP biosynthesis via de novo pathway; IMP from 5-formamido-1-(5-phospho-D-ribosyl)imidazole-4-carboxamide: step 1/1. This chain is Bifunctional purine biosynthesis protein PurH, found in Prochlorococcus marinus (strain AS9601).